Consider the following 137-residue polypeptide: Large ribosomal subunit protein uL16 (137 aa).

The protein belongs to the universal ribosomal protein uL16 family. In terms of assembly, part of the 50S ribosomal subunit.

Binds 23S rRNA and is also seen to make contacts with the A and possibly P site tRNAs. This is Large ribosomal subunit protein uL16 from Streptococcus pneumoniae serotype 2 (strain D39 / NCTC 7466).